The sequence spans 511 residues: Kinesin-like protein 8 (511 aa).

Residues 5 to 356 (NVRVIVRVRP…LRYSEAARRI (352 aa)) form the Kinesin motor domain. Residue 107 to 114 (GQKGTGKT) participates in ATP binding. Phosphoserine occurs at positions 278, 279, 284, and 456. The stretch at 373–489 (EGELDDILTT…KLVKSQLHDY (117 aa)) forms a coiled coil.

Belongs to the TRAFAC class myosin-kinesin ATPase superfamily. Kinesin family.

The protein localises to the cytoplasm. It is found in the cytoskeleton. This is Kinesin-like protein 8 (klp8) from Schizosaccharomyces pombe (strain 972 / ATCC 24843) (Fission yeast).